The chain runs to 473 residues: MSKPVITRFAPSPTGYLHIGGARTALFNWLYAKHCGGKMLLRIEDTDRERSTEAATAAILDGLTWLGLDWDGEAISQFERAPRHREVAEELVANGKAYYCYASPEELEEMREKARAEGRPPRYDGRWRDRDPSEAPAGVKPVIRIKAPRDGETVVHDAVQGDVRFPNKDLDDFIILRSDGTPTYMHAVVVDDHDMGVTHIIRGGDHLTNAARQTIIYNAMGWDVPQMSHISLIHGADGAKLSKRHGALGVDAYRAMGYLPAALRNYLVRLGWSHGDDEIMSTEQMIEWFDVKDINKGAARFDFQKLEAINGLYMRSSDDQALFDALVAVLPEIEGGKELAEALDDKGRAQLLLAMPGLKERAKTLVELADGAKFIFASRPLALDEKAASLLNDEGRAVLKPVYPVLEAVGEWTAESLDAAIRAHAEAEGLKLGKIAQPLRAALTGRATSPGVFDVLVVLGREESLARIGDQIG.

Residues Pro11–Gly21 carry the 'HIGH' region motif. Over residues Lys113–Ser133 the composition is skewed to basic and acidic residues. A disordered region spans residues Lys113 to Pro136. Positions Lys240–Arg244 match the 'KMSKS' region motif. Position 243 (Lys243) interacts with ATP.

This sequence belongs to the class-I aminoacyl-tRNA synthetase family. Glutamate--tRNA ligase type 1 subfamily. Monomer.

It localises to the cytoplasm. It catalyses the reaction tRNA(Glu) + L-glutamate + ATP = L-glutamyl-tRNA(Glu) + AMP + diphosphate. Functionally, catalyzes the attachment of glutamate to tRNA(Glu) in a two-step reaction: glutamate is first activated by ATP to form Glu-AMP and then transferred to the acceptor end of tRNA(Glu). In Brucella suis biovar 1 (strain 1330), this protein is Glutamate--tRNA ligase 2.